The sequence spans 706 residues: Septin ring organizing protein mid2 (706 aa).

Disordered regions lie at residues 62 to 102 and 145 to 180; these read STAP…PFST and DEAS…KKNP. Composition is skewed to polar residues over residues 81 to 90 and 149 to 169; these read YDQTLSNSSS and NKSS…SNQG. Ser-379 carries the phosphoserine modification. A PH domain is found at 583-688; that stretch reads TLLCDGYLCQ…WMSTLRQHLG (106 aa).

Belongs to the BUD4 family.

The protein localises to the cytoplasm. It localises to the cell cortex. It is found in the cytoskeleton. Responsible for the proper stability and function of septins during cytokinesis. Required for the correct formation of the medial septin ring structure in mitosis and for the proper localization of endo-glucanases agn1 and eng1, which are needed for efficient cell separation. May act as a landmark for the localization of hydrolytic proteins to the medial region. The protein is Septin ring organizing protein mid2 (mid2) of Schizosaccharomyces pombe (strain 972 / ATCC 24843) (Fission yeast).